The chain runs to 171 residues: Laminin subunit beta-1 (171 aa).

Positions 1-29 are cleaved as a signal peptide; sequence MNGRTQNLWFSTFRLVIVYALFFAKLCFG. 5 cysteine pairs are disulfide-bonded: C59–C69, C72–C81, C84–C100, C103–C118, and C105–C128. Laminin EGF-like domains follow at residues 66-102, 103-160, and 161-171; these read TGVCNNCLHNTKGTNCQLCKDGYYGNALLGTENVCQR, CQCP…TCKK, and CLCNGNINSAS. Residue N130 is glycosylated (N-linked (GlcNAc...) asparagine). 2 cysteine pairs are disulfide-bonded: C131-C140 and C143-C158.

As to quaternary structure, laminin is a complex glycoprotein, consisting of three different polypeptide chains (alpha, beta, gamma), which are bound to each other by disulfide bonds into a cross-shaped molecule comprising one long and three short arms with globules at each end.

Its subcellular location is the secreted. The protein localises to the extracellular space. The protein resides in the extracellular matrix. It is found in the basement membrane. In terms of biological role, binding to cells via a high affinity receptor, laminin is thought to mediate the attachment, migration and organization of cells into tissues during embryonic development by interacting with other extracellular matrix components. The sequence is that of Laminin subunit beta-1 from Hydra vulgaris (Hydra).